The chain runs to 78 residues: Acyl carrier protein (78 aa).

The 76-residue stretch at 2 to 77 folds into the Carrier domain; sequence SEIAQKVKSI…QAIAYLEQHV (76 aa). The residue at position 37 (Ser37) is an O-(pantetheine 4'-phosphoryl)serine.

It belongs to the acyl carrier protein (ACP) family. 4'-phosphopantetheine is transferred from CoA to a specific serine of apo-ACP by AcpS. This modification is essential for activity because fatty acids are bound in thioester linkage to the sulfhydryl of the prosthetic group.

The protein resides in the cytoplasm. It functions in the pathway lipid metabolism; fatty acid biosynthesis. Functionally, carrier of the growing fatty acid chain in fatty acid biosynthesis. The polypeptide is Acyl carrier protein (Cytophaga hutchinsonii (strain ATCC 33406 / DSM 1761 / CIP 103989 / NBRC 15051 / NCIMB 9469 / D465)).